Here is a 381-residue protein sequence, read N- to C-terminus: Cytochrome b (381 aa).

4 helical membrane passes run 33 to 53 (FGSL…FLAM), 77 to 98 (WLIR…FLHV), 113 to 133 (WNIG…GYVL), and 178 to 198 (FFAL…VHLT). Heme b contacts are provided by His-83 and His-97. Residues His-182 and His-196 each coordinate heme b. A ubiquinone is bound at residue His-201. 4 helical membrane-spanning segments follow: residues 226 to 246 (IKDI…ALFS), 288 to 308 (LGGV…PFLH), 320 to 340 (ISQT…WIGG), and 347 to 367 (FIII…HPMP).

It belongs to the cytochrome b family. The cytochrome bc1 complex contains 11 subunits: 3 respiratory subunits (MT-CYB, CYC1 and UQCRFS1), 2 core proteins (UQCRC1 and UQCRC2) and 6 low-molecular weight proteins (UQCRH/QCR6, UQCRB/QCR7, UQCRQ/QCR8, UQCR10/QCR9, UQCR11/QCR10 and a cleavage product of UQCRFS1). This cytochrome bc1 complex then forms a dimer. Heme b is required as a cofactor.

It localises to the mitochondrion inner membrane. In terms of biological role, component of the ubiquinol-cytochrome c reductase complex (complex III or cytochrome b-c1 complex) that is part of the mitochondrial respiratory chain. The b-c1 complex mediates electron transfer from ubiquinol to cytochrome c. Contributes to the generation of a proton gradient across the mitochondrial membrane that is then used for ATP synthesis. This Sminthopsis youngsoni (Lesser hairy-footed dunnart) protein is Cytochrome b (MT-CYB).